The primary structure comprises 441 residues: MTQMTPREIVHALDQYIIGQQEAKRSVAIALRNRWRRMQLDDSLRGEVVPKNILMIGPTGVGKTEIARRLAKLAGAPFIKVEATKFTEVGYVGRDVESIIRDLVEMAMKMVREQAKEEVAHKAEDATEERILDALLPRPRGSEYDHARDESSTRQTFRKKLREGQLDDKEIDIEITPQGGGFDISAPPGMEEMTSQLQSMFSNMGKQKSETRRVTVEEARRLLHDEEAAKLVNEEQIKHRAIEAVEQNGIVFLDEIDKVAKRGDSGSGGDVSREGVQRDLLPLIEGSTVSTKHGMVKTDHILFIASGAFHLSKPSDLIPELQGRLPIRVELQALTPDDFKRILTEPSAALTKQYQALLATDGLEVNFTDEGIARIAEIAWQVNDGTENIGARRLHTVMERLLEEPSFQGGDMASPLTIDAAYVDEQLGELATDEDLSRYIL.

ATP-binding positions include I18 and 60 to 65 (GVGKTE). The interval 131-158 (ILDALLPRPRGSEYDHARDESSTRQTFR) is disordered. The segment covering 140 to 152 (RGSEYDHARDESS) has biased composition (basic and acidic residues). ATP-binding residues include D254, E320, and R392.

It belongs to the ClpX chaperone family. HslU subfamily. In terms of assembly, a double ring-shaped homohexamer of HslV is capped on each side by a ring-shaped HslU homohexamer. The assembly of the HslU/HslV complex is dependent on binding of ATP.

The protein resides in the cytoplasm. In terms of biological role, ATPase subunit of a proteasome-like degradation complex; this subunit has chaperone activity. The binding of ATP and its subsequent hydrolysis by HslU are essential for unfolding of protein substrates subsequently hydrolyzed by HslV. HslU recognizes the N-terminal part of its protein substrates and unfolds these before they are guided to HslV for hydrolysis. The protein is ATP-dependent protease ATPase subunit HslU of Chromohalobacter salexigens (strain ATCC BAA-138 / DSM 3043 / CIP 106854 / NCIMB 13768 / 1H11).